Here is a 359-residue protein sequence, read N- to C-terminus: UDP-N-acetylglucosamine--N-acetylmuramyl-(pentapeptide) pyrophosphoryl-undecaprenol N-acetylglucosamine transferase (359 aa).

UDP-N-acetyl-alpha-D-glucosamine contacts are provided by residues T15–G17, N127, R166, S191, I245, A264–E269, and Q290.

This sequence belongs to the glycosyltransferase 28 family. MurG subfamily.

The protein localises to the cell inner membrane. It carries out the reaction di-trans,octa-cis-undecaprenyl diphospho-N-acetyl-alpha-D-muramoyl-L-alanyl-D-glutamyl-meso-2,6-diaminopimeloyl-D-alanyl-D-alanine + UDP-N-acetyl-alpha-D-glucosamine = di-trans,octa-cis-undecaprenyl diphospho-[N-acetyl-alpha-D-glucosaminyl-(1-&gt;4)]-N-acetyl-alpha-D-muramoyl-L-alanyl-D-glutamyl-meso-2,6-diaminopimeloyl-D-alanyl-D-alanine + UDP + H(+). The protein operates within cell wall biogenesis; peptidoglycan biosynthesis. Cell wall formation. Catalyzes the transfer of a GlcNAc subunit on undecaprenyl-pyrophosphoryl-MurNAc-pentapeptide (lipid intermediate I) to form undecaprenyl-pyrophosphoryl-MurNAc-(pentapeptide)GlcNAc (lipid intermediate II). The protein is UDP-N-acetylglucosamine--N-acetylmuramyl-(pentapeptide) pyrophosphoryl-undecaprenol N-acetylglucosamine transferase of Pseudomonas putida (strain ATCC 47054 / DSM 6125 / CFBP 8728 / NCIMB 11950 / KT2440).